Here is a 199-residue protein sequence, read N- to C-terminus: Ras-related and estrogen-regulated growth inhibitor (199 aa).

Residues 13–20 (GRAGVGKS), 60–64 (DTAGQ), and 118–121 (NKAD) contribute to the GTP site.

The protein belongs to the small GTPase superfamily. Ras family. Detected in heart, brain, placenta, lung, liver, skin, kidney and pancreas. Detected in estrogen receptor-positive breast-derived cell lines, but not in estrogen receptor-negative cell lines. Expression is decreased or lost in a significant proportion of primary breast tumors with poor clinical prognosis.

The protein localises to the cytoplasm. The enzyme catalyses GTP + H2O = GDP + phosphate + H(+). Functionally, binds GDP/GTP and possesses intrinsic GTPase activity. Has higher affinity for GDP than for GTP. In cell lines overexpression leads to a reduction in the rate of proliferation, colony formation and in tumorigenic potential. The chain is Ras-related and estrogen-regulated growth inhibitor (RERG) from Homo sapiens (Human).